The primary structure comprises 201 residues: Molybdenum cofactor guanylyltransferase (201 aa).

GTP contacts are provided by residues 15-17, lysine 28, aspartate 74, and aspartate 104; that span reads LCG. Residue aspartate 104 participates in Mg(2+) binding.

Belongs to the MobA family. Monomer. It depends on Mg(2+) as a cofactor.

The protein localises to the cytoplasm. It carries out the reaction Mo-molybdopterin + GTP + H(+) = Mo-molybdopterin guanine dinucleotide + diphosphate. Transfers a GMP moiety from GTP to Mo-molybdopterin (Mo-MPT) cofactor (Moco or molybdenum cofactor) to form Mo-molybdopterin guanine dinucleotide (Mo-MGD) cofactor. The sequence is that of Molybdenum cofactor guanylyltransferase from Ectopseudomonas mendocina (strain ymp) (Pseudomonas mendocina).